The chain runs to 712 residues: Glucans biosynthesis glucosyltransferase H (712 aa).

6 consecutive transmembrane segments (helical) span residues 57-77, 89-109, 408-428, 462-482, 552-572, and 573-593; these read LAIM…MYQV, IVLA…VSAL, GIGS…GILI, FAGT…LVVI, YAAP…VSWP, and LLLW…VALL.

Belongs to the glycosyltransferase 2 family. OpgH subfamily.

Its subcellular location is the cell inner membrane. It functions in the pathway glycan metabolism; osmoregulated periplasmic glucan (OPG) biosynthesis. Its function is as follows. Involved in the biosynthesis of osmoregulated periplasmic glucans (OPGs). In Rhodopseudomonas palustris (strain BisA53), this protein is Glucans biosynthesis glucosyltransferase H.